The chain runs to 887 residues: Valine--tRNA ligase (887 aa).

Residues 45 to 55 (PNVTGILHMGH) carry the 'HIGH' region motif. Residues 528-532 (KMSKS) carry the 'KMSKS' region motif. Residue lysine 531 coordinates ATP. Residues 817 to 887 (TGLLNNEAEI…LKESLKSFEE (71 aa)) adopt a coiled-coil conformation.

It belongs to the class-I aminoacyl-tRNA synthetase family. ValS type 1 subfamily. In terms of assembly, monomer.

Its subcellular location is the cytoplasm. The catalysed reaction is tRNA(Val) + L-valine + ATP = L-valyl-tRNA(Val) + AMP + diphosphate. Functionally, catalyzes the attachment of valine to tRNA(Val). As ValRS can inadvertently accommodate and process structurally similar amino acids such as threonine, to avoid such errors, it has a 'posttransfer' editing activity that hydrolyzes mischarged Thr-tRNA(Val) in a tRNA-dependent manner. This chain is Valine--tRNA ligase, found in Fusobacterium nucleatum subsp. nucleatum (strain ATCC 25586 / DSM 15643 / BCRC 10681 / CIP 101130 / JCM 8532 / KCTC 2640 / LMG 13131 / VPI 4355).